The following is a 321-amino-acid chain: Ribose-phosphate pyrophosphokinase 1 (321 aa).

Mg(2+) contacts are provided by Asp-131, His-133, Asp-142, and Asp-146.

Belongs to the ribose-phosphate pyrophosphokinase family.

It catalyses the reaction D-ribose 5-phosphate + ATP = 5-phospho-alpha-D-ribose 1-diphosphate + AMP + H(+). The sequence is that of Ribose-phosphate pyrophosphokinase 1 (PRS1) from Candida albicans (Yeast).